A 232-amino-acid polypeptide reads, in one-letter code: Ribonuclease HII (232 aa).

In terms of domain architecture, RNase H type-2 spans Arg-26–Ala-218. Asp-32, Glu-33, and Asp-127 together coordinate a divalent metal cation.

This sequence belongs to the RNase HII family. Requires Mn(2+) as cofactor. The cofactor is Mg(2+).

It localises to the cytoplasm. The enzyme catalyses Endonucleolytic cleavage to 5'-phosphomonoester.. In terms of biological role, endonuclease that specifically degrades the RNA of RNA-DNA hybrids. This chain is Ribonuclease HII, found in Ralstonia pickettii (strain 12J).